The primary structure comprises 688 residues: T-box transcription factor TBX2-A (688 aa).

Positions 104–277 form a DNA-binding region, T-box; it reads LWDQFHKIGT…NNPFAKGFRD (174 aa). Disordered stretches follow at residues 301 to 436 and 606 to 688; these read CKAD…GSLS and PSTN…ETPK. Composition is skewed to basic and acidic residues over residues 340–361, 378–403, and 412–430; these read NNREEKFGADSDQELDRREIRS, RLEDRGKDKSTPEKKSDSPESRKDGS, and SLEKDKAESRRKEDSKSDP. Positions 621–636 are enriched in low complexity; the sequence is PGSESSKPGSSRESSP. A coiled-coil region spans residues 655 to 679; sequence ASMKDSINELQNIQRLVSGLESQRE. A compositionally biased stretch (basic and acidic residues) spans 676–688; sequence SQREISPGRETPK.

Binds DNA as a monomer.

The protein localises to the nucleus. Functionally, transcription factor which acts as a transcriptional repressor. May also function as a transcriptional activator. Binds to the palindromic T site 5'-TTCACACCTAGGTGTGAA-3' DNA sequence, or a half-site, which are present in the regulatory region of several genes. The sequence is that of T-box transcription factor TBX2-A (tbx2-a) from Xenopus laevis (African clawed frog).